The chain runs to 183 residues: MTTILTVRKGNQVVVGGDGQVSLGNTVMKGNARKVRRLYRGEVIAGFAGGTADAFTLFERFEGQLEKHQGHLVRAAVDLAKDWRSDRALRKLEAMLIVANKESTLIITGTGDVVEPQHGALAIGSGGNFAEAAARALIDNTDLTAKEIVEKSLNIAADICVFTNHSLTIEEITIDAQLEDKSK.

The active site involves threonine 2. Na(+)-binding residues include alanine 157, cysteine 160, and threonine 163.

It belongs to the peptidase T1B family. HslV subfamily. As to quaternary structure, a double ring-shaped homohexamer of HslV is capped on each side by a ring-shaped HslU homohexamer. The assembly of the HslU/HslV complex is dependent on binding of ATP.

It localises to the cytoplasm. It carries out the reaction ATP-dependent cleavage of peptide bonds with broad specificity.. Its activity is regulated as follows. Allosterically activated by HslU binding. In terms of biological role, protease subunit of a proteasome-like degradation complex believed to be a general protein degrading machinery. This Marinomonas sp. (strain MWYL1) protein is ATP-dependent protease subunit HslV.